The chain runs to 519 residues: Histidine--tRNA ligase (519 aa).

The protein belongs to the class-II aminoacyl-tRNA synthetase family. In terms of assembly, homodimer.

Its subcellular location is the cytoplasm. It carries out the reaction tRNA(His) + L-histidine + ATP = L-histidyl-tRNA(His) + AMP + diphosphate + H(+). This Rhodopseudomonas palustris (strain BisB18) protein is Histidine--tRNA ligase.